A 135-amino-acid chain; its full sequence is Galectin-1 (135 aa).

Ala2 is subject to N-acetylalanine. Positions 4-135 constitute a Galectin domain; sequence GLVASNLNLK…DFKIKCVAFD (132 aa). N6-acetyllysine occurs at positions 13 and 29. Ser30 bears the Phosphoserine mark. A beta-D-galactoside-binding positions include 45 to 49, His53, Asn62, and 69 to 72; these read HFNPR and WGTE. Lys108 carries the post-translational modification N6-acetyllysine; alternate. Residue Lys108 is modified to N6-succinyllysine; alternate. Lys128 carries the N6-acetyllysine modification.

As to quaternary structure, homodimer. Binds LGALS3BP. Interacts with CD2, CD3, CD4, CD6, CD7, CD43, ALCAM and CD45. Interacts with laminin (via poly-N-acetyllactosamine). Interacts with SUSD2.

Its subcellular location is the secreted. The protein localises to the extracellular space. It localises to the extracellular matrix. Its function is as follows. Lectin that binds beta-galactoside and a wide array of complex carbohydrates. Plays a role in regulating apoptosis, cell proliferation and cell differentiation. Inhibits CD45 protein phosphatase activity and therefore the dephosphorylation of Lyn kinase. Strong inducer of T-cell apoptosis. This is Galectin-1 (LGALS1) from Pongo abelii (Sumatran orangutan).